Here is a 299-residue protein sequence, read N- to C-terminus: Acetyl-coenzyme A carboxylase carboxyl transferase subunit beta (299 aa).

Positions 25-294 (VWTKCTSCEQ…PFVEPELIQE (270 aa)) constitute a CoA carboxyltransferase N-terminal domain. The Zn(2+) site is built by cysteine 29, cysteine 32, cysteine 48, and cysteine 51. A C4-type zinc finger spans residues 29–51 (CTSCEQVLYRDELKRHLEVCPKC).

This sequence belongs to the AccD/PCCB family. Acetyl-CoA carboxylase is a heterohexamer composed of biotin carboxyl carrier protein (AccB), biotin carboxylase (AccC) and two subunits each of ACCase subunit alpha (AccA) and ACCase subunit beta (AccD). Zn(2+) is required as a cofactor.

The protein resides in the cytoplasm. It catalyses the reaction N(6)-carboxybiotinyl-L-lysyl-[protein] + acetyl-CoA = N(6)-biotinyl-L-lysyl-[protein] + malonyl-CoA. The protein operates within lipid metabolism; malonyl-CoA biosynthesis; malonyl-CoA from acetyl-CoA: step 1/1. Component of the acetyl coenzyme A carboxylase (ACC) complex. Biotin carboxylase (BC) catalyzes the carboxylation of biotin on its carrier protein (BCCP) and then the CO(2) group is transferred by the transcarboxylase to acetyl-CoA to form malonyl-CoA. The protein is Acetyl-coenzyme A carboxylase carboxyl transferase subunit beta of Histophilus somni (strain 129Pt) (Haemophilus somnus).